The primary structure comprises 412 residues: Phosphoglycerate kinase (412 aa).

Substrate-binding positions include 26–28 (DFN), arginine 42, 65–68 (HLGR), arginine 133, and arginine 166. Residues lysine 217, glycine 308, glutamate 339, and 368–371 (GGDS) each bind ATP.

This sequence belongs to the phosphoglycerate kinase family. Monomer.

It is found in the cytoplasm. It carries out the reaction (2R)-3-phosphoglycerate + ATP = (2R)-3-phospho-glyceroyl phosphate + ADP. It functions in the pathway carbohydrate degradation; glycolysis; pyruvate from D-glyceraldehyde 3-phosphate: step 2/5. In Synechococcus sp. (strain JA-2-3B'a(2-13)) (Cyanobacteria bacterium Yellowstone B-Prime), this protein is Phosphoglycerate kinase.